Here is a 320-residue protein sequence, read N- to C-terminus: Ferrochelatase (320 aa).

Residues H194 and E275 each contribute to the Fe cation site.

Belongs to the ferrochelatase family. Monomer.

It localises to the cytoplasm. The enzyme catalyses heme b + 2 H(+) = protoporphyrin IX + Fe(2+). Its pathway is porphyrin-containing compound metabolism; protoheme biosynthesis; protoheme from protoporphyrin-IX: step 1/1. Its function is as follows. Catalyzes the ferrous insertion into protoporphyrin IX. The chain is Ferrochelatase from Shigella boydii serotype 18 (strain CDC 3083-94 / BS512).